The chain runs to 1004 residues: MAPARARLSPALWVVTAAAAATCVSAGRGEVNLLDTSTIHGDWGWLTYPAHGWDSINEVDESFRPIHTYQVCNVMSPNQNNWLRTNWVPRDGARRVYAEIKFTLRDCNSIPGVLGTCKETFNLHYLESDRDLGASTQESQFLKIDTIAADESFTGADLGVRRLKLNTEVRGVGPLSKRGFYLAFQDIGACLAILSLRIYYKKCPAMVRNLAAFSEAVTGADSSSLVEVRGQCVRHSEERDTPKMYCSAEGEWLVPIGKCVCSAGYEERRDACMACELGFYKSAPGDQLCARCPPHSHSATPAAQTCRCDLSYYRAALDPPSAACTRPPSAPVNLISSVNGTSVTLEWAPPLDPGGRSDITYNAVCRRCPWALSHCEACGSGTRFVPQQTSLAQASLLVANLLAHMNYSFWIEAVNGVSNLSPEPRSAAVVNITTNQAAPSQVVVIRQERAGQTSVSLLWQEPEQPNGIILEYEIKYYEKDKEMQSYSTLKAVTTRATVSGLKPGTRYVFQVRARTSAGCGRFSQAMEVETGKPRPRYDTRTIVWICLTLITGLVVLLLLLICKKRHCGYSKAFQDSDEEKMHYQNGQAPPPVFLPLNHPPGKFPETQFSAEPHTYEEPGRAGRSFTREIEASRIHIEKIIGSGESGEVCYGRLQVPGQRDVPVAIKALKAGYTERQRQDFLSEAAIMGQFDHPNIIRLEGVVTRGRLAMIVTEYMENGSLDAFLRTHDGQFTIVQLVGMLRGVGAGMRYLSDLGYIHRDLAARNVLVDGRLVCKVSDFGLSRALEDDPEAAYTTAGGKIPIRWTAPEAIAFRTFSSASDVWSFGVVMWEVLAYGERPYWNMTNQDVISSVEEGYRLPAPMGCPRALHQLMLDCWHKDRAQRPRFAHVVSVLDALVHSPESLRATATVSRCPPPAFARSCFDLRAGGSGNGDLTVGDWLDSIRMGRYRDHFAAGGYSSLGMVLRMNAQDVRALGITLMGHQKKILGSIQTMRAQLSSTQGPRRHL.

An N-terminal signal peptide occupies residues 1 to 26 (MAPARARLSPALWVVTAAAAATCVSA). The Extracellular portion of the chain corresponds to 27–541 (GRGEVNLLDT…KPRPRYDTRT (515 aa)). Residues 30–208 (EVNLLDTSTI…YYKKCPAMVR (179 aa)) form the Eph LBD domain. Fibronectin type-III domains follow at residues 327–437 (PPSA…TNQA) and 438–533 (APSQ…TGKP). Residues Asn339, Asn406, and Asn431 are each glycosylated (N-linked (GlcNAc...) asparagine). Residues 542–562 (IVWICLTLITGLVVLLLLLIC) traverse the membrane as a helical segment. The tract at residues 563–569 (KKRHCGY) is mediates interaction with ANKS1A and ANKS1B. At 563 to 1004 (KKRHCGYSKA…SSTQGPRRHL (442 aa)) the chain is on the cytoplasmic side. The segment at 588-643 (APPPVFLPLNHPPGKFPETQFSAEPHTYEEPGRAGRSFTREIEASRIHIEKIIGSG) is mediates interaction with PIK3CG and required for endocytosis. Position 615 is a phosphotyrosine; by autocatalysis (Tyr615). One can recognise a Protein kinase domain in the interval 634–895 (IHIEKIIGSG…HVVSVLDALV (262 aa)). ATP contacts are provided by residues 640–648 (IGSGESGEV) and Lys666. The Proton acceptor role is filled by Asp759. Tyr838 carries the post-translational modification Phosphotyrosine; by autocatalysis. An SAM domain is found at 929–993 (NGDLTVGDWL…LGSIQTMRAQ (65 aa)). The PDZ-binding motif lies at 1002-1004 (RHL).

It belongs to the protein kinase superfamily. Tyr protein kinase family. Ephrin receptor subfamily. Heterotetramer upon binding of the ligand. The heterotetramer is composed of an ephrin dimer and a receptor dimer. Oligomerization is probably required to induce biological responses. May also form heterodimers with other ephrin receptors. Interacts with FYN; possible downstream effector of EPHA8 in regulation of cell adhesion. Interacts with PIK3CG; regulates integrin-mediated cell adhesion to substrate. Interacts with TIAM1; regulates clathrin-mediated endocytosis of EPHA8. Interacts with ANKS1A and ANKS1B; EPHA8 kinase activity-independent but stimulated by EPHA8 ubiquitination. Phosphorylated. Phosphorylation is stimulated upon binding of its ligands including EFNA2, EFNA3 and EFNA5. Autophosphorylation on Tyr-615 is critical for association with FYN. Autophosphorylation on Tyr-838 modulates tyrosine kinase activity. In terms of processing, ubiquitinated. Ubiquitination by CBL regulates the receptor stability and activity through proteasomal degradation. ANKS1A prevents ubiquitination and degradation. Specifically expressed in the central nervous system.

It localises to the cell membrane. Its subcellular location is the cell projection. The protein resides in the early endosome membrane. The catalysed reaction is L-tyrosyl-[protein] + ATP = O-phospho-L-tyrosyl-[protein] + ADP + H(+). Functionally, receptor tyrosine kinase which binds promiscuously GPI-anchored ephrin-A family ligands residing on adjacent cells, leading to contact-dependent bidirectional signaling into neighboring cells. The signaling pathway downstream of the receptor is referred to as forward signaling while the signaling pathway downstream of the ephrin ligand is referred to as reverse signaling. The GPI-anchored ephrin-A EFNA2, EFNA3, and EFNA5 are able to activate EPHA8 through phosphorylation. With EFNA5 may regulate integrin-mediated cell adhesion and migration on fibronectin substrate but also neurite outgrowth. During development of the nervous system also plays a role in axon guidance. Downstream effectors of the EPHA8 signaling pathway include FYN which promotes cell adhesion upon activation by EPHA8 and the MAP kinases in the stimulation of neurite outgrowth. This is Ephrin type-A receptor 8 (Epha8) from Mus musculus (Mouse).